The following is a 1461-amino-acid chain: Major viral transcription factor ICP4 homolog (1461 aa).

Disordered stretches follow at residues 25–60, 75–518, 811–1002, and 1395–1461; these read AAEEEGIASGPDGGSQGSRRRGSSGEDLLFGPGGLF, AAGA…SREG, RPGP…PRPS, and AGGA…LLLR. Residues 75–90 show a composition bias toward low complexity; that stretch reads AAGATRPPRPPSAQQQ. A compositionally biased stretch (acidic residues) spans 102-113; sequence VLDDEDEEEDEP. Low complexity-rich tracts occupy residues 167–197 and 224–249; these read RSSPSAASPASSSSGSSGSSGSPGPSAAPRR and PAAVAAAPARRGPASPASPAAGPVSA. The span at 250–260 shows a compositional bias: gly residues; it reads PGGGGAPSGGG. The span at 270–285 shows a compositional bias: basic and acidic residues; that stretch reads REPLLDEPAAARRLDP. Composition is skewed to low complexity over residues 292–308 and 353–405; these read SPVSSNPNSSSSSTTTV and GFSS…SSSS. The segment covering 423 to 434 has biased composition (pro residues); sequence GPPPSPPAPAAA. Residues 435 to 453 show a composition bias toward low complexity; the sequence is PRPSASSASATSSSAAASP. A compositionally biased stretch (pro residues) spans 814 to 826; it reads PAEPAPGLPPLWP. Residues 838 to 888 are compositionally biased toward low complexity; that stretch reads PAAAGAPSGLPGSGPSSPASTKSGSSTKSSSGTKSGLSGSSGYASSPAAGP. Residues 894-903 are compositionally biased toward basic residues; it reads RRKKKRRAPG. Over residues 944 to 965 the composition is skewed to low complexity; that stretch reads LGLGPAPDPAPALVSSSSSSSS.

It belongs to the herpesviridae ICP4 family. In terms of processing, a long stretch of serine residues may be a major site of phosphorylation.

It localises to the host nucleus. This IE protein is a multifunctional protein capable of migrating to the nucleus, binding to DNA, trans-activating other viral genes, and autoregulating its own synthesis. The polypeptide is Major viral transcription factor ICP4 homolog (IE) (Sus scrofa (Pig)).